The following is a 212-amino-acid chain: Small ribosomal subunit protein eS6 (212 aa).

It belongs to the eukaryotic ribosomal protein eS6 family.

This chain is Small ribosomal subunit protein eS6, found in Metallosphaera sedula (strain ATCC 51363 / DSM 5348 / JCM 9185 / NBRC 15509 / TH2).